We begin with the raw amino-acid sequence, 263 residues long: Adaptin ear-binding coat-associated protein 2 (263 aa).

Disordered regions lie at residues 166 to 194 and 219 to 263; these read KKKEGAAGNPRVRPASTGGLSLLPPPPGG and APSS…WVQF. Ser-181 bears the Phosphoserine mark. 2 consecutive short sequence motifs (WXXF motif) follow at residues 240–243 and 260–263; these read WGDF and WVQF. Low complexity predominate over residues 246–263; it reads STGSTSSQTQPGTGWVQF.

The protein belongs to the NECAP family. In terms of assembly, interacts with AP1G1 and AP2A1 components of the adapter protein complexes AP-1 and AP-2. Interacts with the GAE domain proteins GGA1, GGA2 and GGA3.

The protein localises to the cytoplasmic vesicle. It localises to the clathrin-coated vesicle membrane. Its subcellular location is the cell membrane. Its function is as follows. Involved in endocytosis. This Homo sapiens (Human) protein is Adaptin ear-binding coat-associated protein 2 (NECAP2).